Consider the following 166-residue polypeptide: NAD(P)H-quinone oxidoreductase subunit I, chloroplastic (166 aa).

2 consecutive 4Fe-4S ferredoxin-type domains span residues 55–84 and 95–124; these read GRIH…VDWK and LNYS…MTEE. Residues Cys-64, Cys-67, Cys-70, Cys-74, Cys-104, Cys-107, Cys-110, and Cys-114 each coordinate [4Fe-4S] cluster.

The protein belongs to the complex I 23 kDa subunit family. In terms of assembly, NDH is composed of at least 16 different subunits, 5 of which are encoded in the nucleus. [4Fe-4S] cluster is required as a cofactor.

The protein resides in the plastid. It localises to the chloroplast thylakoid membrane. It catalyses the reaction a plastoquinone + NADH + (n+1) H(+)(in) = a plastoquinol + NAD(+) + n H(+)(out). The enzyme catalyses a plastoquinone + NADPH + (n+1) H(+)(in) = a plastoquinol + NADP(+) + n H(+)(out). Its function is as follows. NDH shuttles electrons from NAD(P)H:plastoquinone, via FMN and iron-sulfur (Fe-S) centers, to quinones in the photosynthetic chain and possibly in a chloroplast respiratory chain. The immediate electron acceptor for the enzyme in this species is believed to be plastoquinone. Couples the redox reaction to proton translocation, and thus conserves the redox energy in a proton gradient. This is NAD(P)H-quinone oxidoreductase subunit I, chloroplastic from Raillardella argentea (Silky raillardella).